The primary structure comprises 65 residues: Large ribosomal subunit protein bL33c (65 aa).

Belongs to the bacterial ribosomal protein bL33 family.

It is found in the plastid. It localises to the chloroplast. In Porphyra purpurea (Red seaweed), this protein is Large ribosomal subunit protein bL33c (rpl33).